Here is a 212-residue protein sequence, read N- to C-terminus: Protein Thf1 (212 aa).

Residues 179–201 (ERMEQAVELMQETLAADRRKKEK) are a coiled coil.

It belongs to the THF1 family.

May be involved in photosynthetic membrane biogenesis. The chain is Protein Thf1 from Parasynechococcus marenigrum (strain WH8102).